A 502-amino-acid chain; its full sequence is Nostrin (502 aa).

The F-BAR domain maps to 1–260 (MRDPLTDCSY…AISKVDVEKD (260 aa)). Ser114 carries the phosphoserine modification. Coiled coils occupy residues 160–230 (SMTQ…LNQY) and 305–335 (KLWR…SSAS). Residues 292–372 (PMDKERRKSL…SYKLSTVLAD (81 aa)) enclose the REM-1 domain. Residues 413–437 (KAESKAPAGEQNNPSSSRPGSSVSQ) form a disordered region. Low complexity predominate over residues 423–437 (QNNPSSSRPGSSVSQ). In terms of domain architecture, SH3 spans 438–497 (GNNQLCKALYTFQARQDDELNLEKGDIVTIHEKKEEGWWFGSLNGKKGHFPAAYVEELPP). Position 479 is a phosphoserine (Ser479).

Homotrimer. Interacts with DAB2. Interacts with NOS3, WASL and CAV1. Interacts (via SH3 domain) with DNM2; this interaction allows the recruitment of NOS3 to dynamin-positive structures. As to expression, over-expressed in brain microcapillaries from spontaneously hypertensive rats.

It is found in the cell membrane. Its subcellular location is the cytoplasmic vesicle. The protein resides in the cytoplasm. It localises to the cytoskeleton. The protein localises to the nucleus. Multivalent adapter protein which may decrease NOS3 activity by inducing its translocation away from the plasma membrane. The protein is Nostrin of Rattus norvegicus (Rat).